The primary structure comprises 497 residues: Probable malate:quinone oxidoreductase (497 aa).

The protein belongs to the MQO family. FAD is required as a cofactor.

It catalyses the reaction (S)-malate + a quinone = a quinol + oxaloacetate. Its pathway is carbohydrate metabolism; tricarboxylic acid cycle; oxaloacetate from (S)-malate (quinone route): step 1/1. The polypeptide is Probable malate:quinone oxidoreductase (Hahella chejuensis (strain KCTC 2396)).